Here is a 485-residue protein sequence, read N- to C-terminus: Aspartyl protease family protein 2 (485 aa).

The first 23 residues, 1–23 (MVGRRKALLFSLCFFFLSLPSFS), serve as a signal peptide directing secretion. Positions 43–71 (PVSFQPDSDSESLLESEFESGSDSESSSS) are disordered. Residues 50–64 (SDSESLLESEFESGS) show a composition bias toward acidic residues. The Peptidase A1 domain maps to 142–480 (YFTRLGVGTP…DLASSRVGFA (339 aa)). Residues Asp-160 and Asp-365 contribute to the active site.

It belongs to the peptidase A1 family.

Its function is as follows. Aspartyl protease. Not able to cleave BAG6. The protein is Aspartyl protease family protein 2 of Arabidopsis thaliana (Mouse-ear cress).